The sequence spans 72 residues: Translation initiation factor IF-1 (72 aa).

The region spanning 1–72 (MAKSDVIEVE…SKGRITYRFK (72 aa)) is the S1-like domain.

The protein belongs to the IF-1 family. As to quaternary structure, component of the 30S ribosomal translation pre-initiation complex which assembles on the 30S ribosome in the order IF-2 and IF-3, IF-1 and N-formylmethionyl-tRNA(fMet); mRNA recruitment can occur at any time during PIC assembly.

The protein resides in the cytoplasm. One of the essential components for the initiation of protein synthesis. Stabilizes the binding of IF-2 and IF-3 on the 30S subunit to which N-formylmethionyl-tRNA(fMet) subsequently binds. Helps modulate mRNA selection, yielding the 30S pre-initiation complex (PIC). Upon addition of the 50S ribosomal subunit IF-1, IF-2 and IF-3 are released leaving the mature 70S translation initiation complex. This chain is Translation initiation factor IF-1, found in Levilactobacillus brevis (strain ATCC 367 / BCRC 12310 / CIP 105137 / JCM 1170 / LMG 11437 / NCIMB 947 / NCTC 947) (Lactobacillus brevis).